Reading from the N-terminus, the 280-residue chain is Putative transcription factor kapC (280 aa).

Residues 1 to 102 (MQPALAPHPS…GKRPLSTSKR (102 aa)) form a disordered region. Pro residues predominate over residues 39–49 (PQPPAPQPPHM). The segment covering 79–89 (TQPDVTGQETP) has biased composition (polar residues). The bZIP domain occupies 96–159 (PLSTSKRAAQ…EYIINLQSRL (64 aa)). Residues 97-120 (LSTSKRAAQNRAAQRAFRQRKEAH) are basic motif. The segment at 124–155 (LEGKVKAYESMGEAIKALQAENYQLREYIINL) is leucine-zipper. Residues 169 to 280 (LPGNIDLSQP…EQTHGLPLIS (112 aa)) are disordered. The segment covering 197–206 (APPPTAPQQP) has biased composition (pro residues).

Belongs to the bZIP family.

It localises to the nucleus. In terms of biological role, putative transcription factor. The polypeptide is Putative transcription factor kapC (kapC) (Aspergillus fumigatus (strain ATCC MYA-4609 / CBS 101355 / FGSC A1100 / Af293) (Neosartorya fumigata)).